The sequence spans 150 residues: UPF0336 protein SAV_4901 (150 aa).

Positions 8–126 (VGRSYPPTDP…GNDVVDVRGE (119 aa)) constitute a MaoC-like domain.

This sequence belongs to the UPF0336 family.

This is UPF0336 protein SAV_4901 from Streptomyces avermitilis (strain ATCC 31267 / DSM 46492 / JCM 5070 / NBRC 14893 / NCIMB 12804 / NRRL 8165 / MA-4680).